Consider the following 747-residue polypeptide: DNA-directed RNA polymerase subunit beta' (747 aa).

4 residues coordinate Zn(2+): Cys-70, Cys-72, Cys-97, and Cys-100. Mg(2+) contacts are provided by Asp-502, Asp-504, and Asp-506.

Belongs to the RNA polymerase beta' chain family. RpoC1 subfamily. As to quaternary structure, in plastids the minimal PEP RNA polymerase catalytic core is composed of four subunits: alpha, beta, beta', and beta''. When a (nuclear-encoded) sigma factor is associated with the core the holoenzyme is formed, which can initiate transcription. Mg(2+) is required as a cofactor. It depends on Zn(2+) as a cofactor.

It is found in the plastid. It localises to the chloroplast. The enzyme catalyses RNA(n) + a ribonucleoside 5'-triphosphate = RNA(n+1) + diphosphate. In terms of biological role, DNA-dependent RNA polymerase catalyzes the transcription of DNA into RNA using the four ribonucleoside triphosphates as substrates. The sequence is that of DNA-directed RNA polymerase subunit beta' from Gnetum parvifolium (Small-leaved jointfir).